We begin with the raw amino-acid sequence, 611 residues long: MKRLPNNPGVYRMFNSDGGVLYVGKARNLKKRVSNYARGIGHSNRITRMIRETVTMEFVVTRTETEALLLEANLIKRLRPRFNVLMRDDKSFPYILLTGGHRAPGIFKHRGARSRKGDYFGPFASAGAVGRTINALQRAFLLRTCTDSVFETRTRPCLLYQIKRCSAPCTYEISDEDYAGLVAEAKAFLSGKSQSVKDHLAAAMQAASADLDFEHAAVYRDRLAALSHVQSHQGINPQTVEEADVFAIHQEGGMTCIQVFFFRTGQNWGNRAYFPKADSSLGPAEVLGAFLSQFYDDKPCPKLVLLSETVEEQSLITEALSTRAGHKVQVSVPQRGEKKELVQHALTNAREALGRRLAETSSQARLLQGLAETFGLPRAPRRIEVYDNSHIMGTNAVGGMIVAGPEGFVKNQYRKFNIRSTDITPGDDFGMMREVIERRFSRLVKEHGTPAGEVKNPDAFPAWPDVILIDGGQGQVGAVRQILGEMGISDLVTAIGIAKGVDREAGRERFFMEGKQPFTLPPRDPVLYFIQRLRDEAHRFAIGTHRARRKKEIVRNPLDEIAGIGPTRKRALLHHFGTAKAVSRAAVEDLMQIDGISEAMARAIHDHFRDK.

Positions 6-84 constitute a GIY-YIG domain; that stretch reads NNPGVYRMFN…IKRLRPRFNV (79 aa). Residues 194-229 enclose the UVR domain; sequence QSVKDHLAAAMQAASADLDFEHAAVYRDRLAALSHV.

It belongs to the UvrC family. In terms of assembly, interacts with UvrB in an incision complex.

Its subcellular location is the cytoplasm. Functionally, the UvrABC repair system catalyzes the recognition and processing of DNA lesions. UvrC both incises the 5' and 3' sides of the lesion. The N-terminal half is responsible for the 3' incision and the C-terminal half is responsible for the 5' incision. The chain is UvrABC system protein C from Brucella abortus (strain 2308).